Consider the following 467-residue polypeptide: MLKIYSSLSQQKEEFKPIQAGKVGIYVCGMTVYDYCHLGHARVLVCFDIITRYLRAKGYDVNYVRNITDVDDKILNRARDNGESVDALTARFIDAMHEDERALGVLSPTSEPRATGHIDEIIAMIQRLMDKGYAYHASNGDVYYSVEQFADYGKLSKQKLDEIRAGARIEVDAEKRSPADFVLWKAAKPGELSWDSPWGEGRPGWHIECSAMSTRCLGDTFDIHGGGPDLKFPHHENEIAQSEAATGCKYVNYWMHAGAVRVNKEKMSKSLGNFFTIREILDKYPAEVVRYFLASSHYRSAIDYSDVALEEARSGLERLYNSIRELYGELGAVSMDEPLVGEYRERFHQAMDDDFNTSSAVAVLFDMAKAVNVAKKEDRTRALSLAKGMVDLAEVLGLLQADPESLMQGEGEEVGGLSVAEIEDFIAQRNAARANKDFAESDRIRDLLKEKGVLLNDSREGTSWQRA.

Cys28 contacts Zn(2+). The 'HIGH' region signature appears at 30–40 (MTVYDYCHLGH). Zn(2+) is bound by residues Cys209, His234, and Glu238. The 'KMSKS' region motif lies at 266 to 270 (KMSKS). Lys269 contacts ATP.

The protein belongs to the class-I aminoacyl-tRNA synthetase family. In terms of assembly, monomer. Zn(2+) is required as a cofactor.

The protein localises to the cytoplasm. The catalysed reaction is tRNA(Cys) + L-cysteine + ATP = L-cysteinyl-tRNA(Cys) + AMP + diphosphate. This is Cysteine--tRNA ligase from Hahella chejuensis (strain KCTC 2396).